Reading from the N-terminus, the 159-residue chain is Cytochrome c-type biogenesis protein CcmE (159 aa).

Over Met-1–Arg-8 the chain is Cytoplasmic. The chain crosses the membrane as a helical; Signal-anchor for type II membrane protein span at residues Leu-9 to Ala-29. The Periplasmic segment spans residues Leu-30–Ser-159. Positions 130 and 134 each coordinate heme. The segment covering Tyr-134–His-147 has biased composition (basic and acidic residues). The tract at residues Tyr-134 to Ser-159 is disordered.

This sequence belongs to the CcmE/CycJ family.

Its subcellular location is the cell inner membrane. In terms of biological role, heme chaperone required for the biogenesis of c-type cytochromes. Transiently binds heme delivered by CcmC and transfers the heme to apo-cytochromes in a process facilitated by CcmF and CcmH. This Escherichia coli (strain SMS-3-5 / SECEC) protein is Cytochrome c-type biogenesis protein CcmE.